Reading from the N-terminus, the 324-residue chain is MGMSNLTRLSEFILLGLSSRSEDQRPLFALFLIIYLVTLMGNLLIILAIHSDPRLQNPMYFFLSILSFADICYTTVIVPKMLVNFLSEKKTISYAECLAQMYFFLVFGNIDSYLLAAMAINRCVAICNPFHYVTVMNRRCCVLLLAFPITFSYFHSLLHVLLVNRLTFCTSNVIHHFFCDVNPVLKLSCSSTFVNEIVAMTEGLASVMAPFVCIIISYLRILIAVLKIPSAAGKHKAFSTCSSHLTVVILFYGSISYVYLQPLSSYTVKDRIATINYTVLTSVLNPFIYSLRNKDMKRGLQKLINKIKSQMSRFSTKTNKICGP.

At 1–25 the chain is on the extracellular side; that stretch reads MGMSNLTRLSEFILLGLSSRSEDQR. The N-linked (GlcNAc...) asparagine glycan is linked to Asn5. Residues 26 to 49 traverse the membrane as a helical segment; the sequence is PLFALFLIIYLVTLMGNLLIILAI. At 50-57 the chain is on the cytoplasmic side; it reads HSDPRLQN. The chain crosses the membrane as a helical span at residues 58-79; it reads PMYFFLSILSFADICYTTVIVP. Residues 80 to 100 are Extracellular-facing; sequence KMLVNFLSEKKTISYAECLAQ. A disulfide bond links Cys97 and Cys189. The chain crosses the membrane as a helical span at residues 101 to 120; that stretch reads MYFFLVFGNIDSYLLAAMAI. Residues 121 to 139 lie on the Cytoplasmic side of the membrane; it reads NRCVAICNPFHYVTVMNRR. The chain crosses the membrane as a helical span at residues 140–158; that stretch reads CCVLLLAFPITFSYFHSLL. Residues 159 to 196 lie on the Extracellular side of the membrane; it reads HVLLVNRLTFCTSNVIHHFFCDVNPVLKLSCSSTFVNE. A helical membrane pass occupies residues 197-219; sequence IVAMTEGLASVMAPFVCIIISYL. The Cytoplasmic portion of the chain corresponds to 220–236; sequence RILIAVLKIPSAAGKHK. A helical transmembrane segment spans residues 237–259; it reads AFSTCSSHLTVVILFYGSISYVY. The Extracellular segment spans residues 260–271; it reads LQPLSSYTVKDR. Residues 272 to 291 form a helical membrane-spanning segment; that stretch reads IATINYTVLTSVLNPFIYSL. Over 292–324 the chain is Cytoplasmic; it reads RNKDMKRGLQKLINKIKSQMSRFSTKTNKICGP.

This sequence belongs to the G-protein coupled receptor 1 family.

Its subcellular location is the cell membrane. In terms of biological role, odorant receptor. The polypeptide is Olfactory receptor 1L3 (OR1L3) (Homo sapiens (Human)).